A 223-amino-acid chain; its full sequence is N-(5'-phosphoribosyl)anthranilate isomerase (223 aa).

It belongs to the TrpF family.

The enzyme catalyses N-(5-phospho-beta-D-ribosyl)anthranilate = 1-(2-carboxyphenylamino)-1-deoxy-D-ribulose 5-phosphate. The protein operates within amino-acid biosynthesis; L-tryptophan biosynthesis; L-tryptophan from chorismate: step 3/5. This Moorella thermoacetica (strain ATCC 39073 / JCM 9320) protein is N-(5'-phosphoribosyl)anthranilate isomerase.